Consider the following 83-residue polypeptide: Exodeoxyribonuclease 7 small subunit (83 aa).

Belongs to the XseB family. As to quaternary structure, heterooligomer composed of large and small subunits.

The protein localises to the cytoplasm. It catalyses the reaction Exonucleolytic cleavage in either 5'- to 3'- or 3'- to 5'-direction to yield nucleoside 5'-phosphates.. Bidirectionally degrades single-stranded DNA into large acid-insoluble oligonucleotides, which are then degraded further into small acid-soluble oligonucleotides. This is Exodeoxyribonuclease 7 small subunit from Rhodopseudomonas palustris (strain BisB5).